Here is a 207-residue protein sequence, read N- to C-terminus: Casparian strip membrane protein 1 (207 aa).

Over residues 1–12 the composition is skewed to polar residues; sequence MEADSTTINVTE. A disordered region spans residues 1–20; it reads MEADSTTINVTETPKERKGK. Topologically, residues 1–48 are cytoplasmic; the sequence is MEADSTTINVTETPKERKGKAPLLAAPPASSGVKRVLQKAPKGGYKRG. The chain crosses the membrane as a helical span at residues 49-69; that stretch reads LAVFDVVLRLAGIATALGAAI. At 70–98 the chain is on the extracellular side; the sequence is AMGSTDQTLPFFTQFFQFKAEFDDLPAFT. A helical transmembrane segment spans residues 99 to 119; the sequence is FFVIANAITAAYLALTIPISI. Residues 120–131 are Cytoplasmic-facing; that stretch reads VCIIRPHLVAPR. A helical transmembrane segment spans residues 132-152; it reads VLLIFLDTVMVALTTAAAGGT. The Extracellular segment spans residues 153-184; the sequence is ASIVYLAHNGNSDANWPAICQQFNDXCQKVSG. The chain crosses the membrane as a helical span at residues 185-205; that stretch reads AVVASFLTVVVLMLLIVLSAF. At 206 to 207 the chain is on the cytoplasmic side; the sequence is AL.

It belongs to the Casparian strip membrane proteins (CASP) family. As to quaternary structure, homodimer and heterodimers.

The protein localises to the cell membrane. Functionally, regulates membrane-cell wall junctions and localized cell wall deposition. Required for establishment of the Casparian strip membrane domain (CSD) and the subsequent formation of Casparian strips, a cell wall modification of the root endodermis that determines an apoplastic barrier between the intraorganismal apoplasm and the extraorganismal apoplasm and prevents lateral diffusion. The sequence is that of Casparian strip membrane protein 1 from Cynara cardunculus var. scolymus (Globe artichoke).